Here is a 158-residue protein sequence, read N- to C-terminus: uncharacterized protein (158 aa).

The 62-residue stretch at 12-73 (LDEIDRAILR…LINPFKAGYE (62 aa)) folds into the HTH asnC-type domain. A DNA-binding region (H-T-H motif) is located at residues 31–50 (YSEISRRINVPESTVRARVN).

This is an uncharacterized protein from Pyrococcus horikoshii (strain ATCC 700860 / DSM 12428 / JCM 9974 / NBRC 100139 / OT-3).